Consider the following 2359-residue polypeptide: Voltage-dependent T-type calcium channel subunit alpha-1H (2359 aa).

Residues 1-63 (MTEGTLAADE…PGTECGADLG (63 aa)) form a disordered region. Residues 1 to 100 (MTEGTLAADE…SWCLRLVCNP (100 aa)) are Cytoplasmic-facing. Positions 24-36 (APVRASPASPGAP) are enriched in low complexity. The stretch at 87 to 422 (TRPRSWCLRL…LCLVVIATQF (336 aa)) is one I repeat. Residues 101–119 (WFEHISMLVIMLNCVTLGM) form a helical membrane-spanning segment. The Extracellular segment spans residues 120-141 (FRPCEDVECRSERCSILEAFDD). Residue Asp140 participates in Zn(2+) binding. The chain crosses the membrane as a helical span at residues 142-160 (FIFAFFAVEMVIKMVALGL). Over 161-169 (FGQKCYLGD) the chain is Cytoplasmic. The helical transmembrane segment at 170 to 184 (TWNRLDFFIVMAGMM) threads the bilayer. Residues 185–193 (EYSLDGHNV) are Extracellular-facing. 2 residues coordinate Zn(2+): Asp189 and His191. An N-linked (GlcNAc...) asparagine glycan is attached at Asn192. A helical membrane pass occupies residues 194-212 (SLSAIRTVRVLRPLRAINR). At 213-232 (VPSMRILVTLLLDTLPMLGN) the chain is on the cytoplasmic side. A helical membrane pass occupies residues 233 to 253 (VLLLCFFVFFIFGIVGVQLWA). The Extracellular portion of the chain corresponds to 254 to 394 (GLLRNRCFLD…YYVMDAHSFY (141 aa)). N-linked (GlcNAc...) asparagine glycosylation occurs at Asn271. The helical transmembrane segment at 395-419 (NFIYFILLIIMGSFFMINLCLVVIA) threads the bilayer. The Cytoplasmic portion of the chain corresponds to 420-790 (TQFSETKQRE…GKLRRIVDSK (371 aa)). Disordered stretches follow at residues 490 to 573 (VDPS…SESV), 620 to 656 (GTVNSKGGTSSRPKGLRGAGAPGAAVHSPLSLGSPRP), and 737 to 769 (GDCRDPVQQPHEVGTPGHSNERRRTPLRKASQP). Residues 503–532 (RRPRRAGRRTASVHHLVYHHHHHHHHHYHF) are compositionally biased toward basic residues. The span at 557 to 566 (PPSPPSPGHG) shows a compositional bias: pro residues. Residues 620 to 631 (GTVNSKGGTSSR) are compositionally biased toward polar residues. Residues 776-1015 (WASFSGKLRR…LLVAILVEGF (240 aa)) form an II repeat. The chain crosses the membrane as a helical span at residues 791 to 811 (YFNRGIMAAILVNTLSMGVEY). Over 812–824 (HEQPEELTNALEI) the chain is Extracellular. The chain crosses the membrane as a helical span at residues 825 to 846 (SNIVFTSMFALEMLLKLLACGP). Topologically, residues 847–852 (LGYIRN) are cytoplasmic. The chain crosses the membrane as a helical span at residues 853-871 (PYNIFDGIVVVISVWEIVG). The Extracellular segment spans residues 872-879 (QANGGLSV). The helical transmembrane segment at 880 to 903 (LRTFRLLRVLKLVRFLPALRRQLV) threads the bilayer. The Cytoplasmic segment spans residues 904–914 (VLMRTMDNVAT). Residues 915 to 935 (FCMLLMLFIFIFSILGMHLFG) form a helical membrane-spanning segment. The Extracellular portion of the chain corresponds to 936–987 (CKFSLKTDSGDTVPDRKNFDSLLWAIVTVFQILTQEDWNVVLYNGMASTSSW). The chain crosses the membrane as a helical span at residues 988–1012 (AALYFVALMTFGNYVLFNLLVAILV). The Cytoplasmic segment spans residues 1013–1301 (EGFQAEGDAT…NRLRVSCQKV (289 aa)). The disordered stretch occupies residues 1061 to 1197 (GHLEGRGSLP…GASPGPRATP (137 aa)). Residues 1117 to 1126 (SLASLRSSPC) are compositionally biased toward polar residues. Residues 1130–1147 (GPNSAGSSRRSSWNSLGR) are compositionally biased toward low complexity. An III repeat occupies 1292–1569 (NRLRVSCQKV…MFVGVVVENF (278 aa)). The chain crosses the membrane as a helical span at residues 1302 to 1324 (IAHKMFDHVVLVFIFLNCITIAL). The Extracellular portion of the chain corresponds to 1325 to 1342 (ERPDIDPGSTERAFLSVS). The chain crosses the membrane as a helical span at residues 1343 to 1363 (NYIFTAIFVVEMMVKVVALGL). Residues 1364–1373 (LWGEHAYLQS) lie on the Cytoplasmic side of the membrane. A helical transmembrane segment spans residues 1374-1393 (SWNVLDGLLVLVSLVDIIVA). The Extracellular segment spans residues 1394-1407 (MASAGGAKILGVLR). The chain crosses the membrane as a helical span at residues 1408 to 1429 (VLRLLRTLRPLRVISRAPGLKL). Residues 1430 to 1439 (VVETLISSLR) lie on the Cytoplasmic side of the membrane. Residues 1440 to 1463 (PIGNIVLICCAFFIIFGILGVQLF) form a helical membrane-spanning segment. Residues 1464–1540 (KGKFYYCEGT…DQQPVQNHNP (77 aa)) lie on the Extracellular side of the membrane. An N-linked (GlcNAc...) asparagine glycan is attached at Asn1477. A helical transmembrane segment spans residues 1541–1566 (WMLLYFISFLLIVSFFVLNMFVGVVV). Topologically, residues 1567–1621 (ENFHKCRQHQEAEEARRREEKRLRRLERRRRKAQRRPYYADYSHTRRSIHSLCTS) are cytoplasmic. The stretch at 1607 to 1868 (DYSHTRRSIH…VVVAVLMKHL (262 aa)) is one IV repeat. Residues 1622–1642 (HYLDLFITFIICLNVITMSME) traverse the membrane as a helical segment. The Extracellular segment spans residues 1643 to 1656 (HYNQPKSLDEALKY). Residues 1657-1678 (CNYVFTIVFVFEAALKLVAFGF) traverse the membrane as a helical segment. Residues 1679 to 1685 (RRFFKDR) are Cytoplasmic-facing. The chain crosses the membrane as a helical span at residues 1686–1704 (WNQLDLAIVLLSIMGIALE). Topologically, residues 1705–1718 (EIEMNAALPINPTI) are extracellular. The helical transmembrane segment at 1719–1742 (IRIMRVLRIARVLKLLKMATGMRA) threads the bilayer. Residues 1743 to 1756 (LLDTVVQALPQVGN) lie on the Cytoplasmic side of the membrane. The helical transmembrane segment at 1757–1777 (LGLLFMLLFFIYAALGVELFG) threads the bilayer. Over 1778-1840 (RLECSEDNPC…KHCLSYLPAL (63 aa)) the chain is Extracellular. The helical transmembrane segment at 1841–1868 (SPVYFVTFMLVAQFVLVNVVVAVLMKHL) threads the bilayer. Topologically, residues 1869-2359 (EESNKEARED…APDDSGDEPV (491 aa)) are cytoplasmic. Residues 1891 to 1911 (QGSTAQPPPTAQESQGTQPDT) show a composition bias toward polar residues. Disordered regions lie at residues 1891–1913 (QGSTAQPPPTAQESQGTQPDTPN), 1974–2003 (SFQVPSAASSPARVSDPLCALSPRGTPRSL), 2016–2258 (HSES…GERW), and 2335–2359 (PQTPLKKPGSTPATPAPDDSGDEPV). The span at 2016-2026 (HSESLEGKVDD) shows a compositional bias: basic and acidic residues. Positions 2086–2096 (DEAEAADPADE) are enriched in acidic residues. Positions 2166–2181 (GESHLESGEVRGRASE) are enriched in basic and acidic residues.

This sequence belongs to the calcium channel alpha-1 subunit (TC 1.A.1.11) family. CACNA1H subfamily. As to quaternary structure, interacts (via N-terminal cytoplasmic domain) with STAC. In terms of processing, in response to raising of intracellular calcium, the T-type channels are activated by CaM-kinase II. As to expression, expressed in brain.

It is found in the cell membrane. The enzyme catalyses Ca(2+)(in) = Ca(2+)(out). In terms of biological role, voltage-sensitive calcium channel that gives rise to T-type calcium currents. T-type calcium channels belong to the 'low-voltage activated (LVA)' group. A particularity of this type of channel is an opening at quite negative potentials, and a voltage-dependent inactivation. T-type channels serve pacemaking functions in both central neurons and cardiac nodal cells and support calcium signaling in secretory cells and vascular smooth muscle. They may also be involved in the modulation of firing patterns of neurons. In the adrenal zona glomerulosa, participates in the signaling pathway leading to aldosterone production in response to either AGT/angiotensin II, or hyperkalemia. The protein is Voltage-dependent T-type calcium channel subunit alpha-1H (Cacna1h) of Rattus norvegicus (Rat).